Consider the following 421-residue polypeptide: Homoserine dehydrogenase (421 aa).

NAD(+) is bound by residues valine 15, alanine 34, and valine 44. An NADP(+)-binding site is contributed by valine 15. Valine 15 is an NADPH binding site. 2 residues coordinate NADP(+): arginine 46 and lysine 103. NADPH-binding residues include arginine 46 and lysine 103. Na(+) is bound by residues glutamate 125, valine 128, glycine 130, and isoleucine 132. NADP(+) contacts are provided by glycine 183 and glutamate 186. Residues glutamate 186 and aspartate 197 each coordinate L-homoserine. The Proton donor role is filled by lysine 201. Glycine 298 contributes to the NAD(+) binding site. Glycine 298 contacts NADP(+). NADPH is bound at residue glycine 298. The region spanning 343–418 (YARLLVSDEK…SVLDTPKMIR (76 aa)) is the ACT domain.

Belongs to the homoserine dehydrogenase family. It depends on a metal cation as a cofactor.

It catalyses the reaction L-homoserine + NADP(+) = L-aspartate 4-semialdehyde + NADPH + H(+). The catalysed reaction is L-homoserine + NAD(+) = L-aspartate 4-semialdehyde + NADH + H(+). The protein operates within amino-acid biosynthesis; L-methionine biosynthesis via de novo pathway; L-homoserine from L-aspartate: step 3/3. It participates in amino-acid biosynthesis; L-threonine biosynthesis; L-threonine from L-aspartate: step 3/5. Catalyzes the conversion of L-aspartate-beta-semialdehyde (L-Asa) to L-homoserine (L-Hse), the third step in the biosynthesis of threonine and methionine from aspartate. The chain is Homoserine dehydrogenase (hom) from Helicobacter pylori (strain ATCC 700392 / 26695) (Campylobacter pylori).